Reading from the N-terminus, the 147-residue chain is Basic phospholipase A2 beta-bungarotoxin A1 chain (147 aa).

Residues 1–19 (MNPAHLLVLSAVCVSLLGA) form the signal peptide. The propeptide occupies 20-27 (ANIPPHPL). 6 disulfide bridges follow: Cys54-Cys146, Cys56-Cys72, Cys71-Cys127, Cys78-Cys120, Cys88-Cys113, and Cys106-Cys118. Residues Tyr55, Gly57, and Gly59 each contribute to the Ca(2+) site. His75 is an active-site residue. A Ca(2+)-binding site is contributed by Asp76. Asp121 is an active-site residue.

It belongs to the phospholipase A2 family. Group I subfamily. D49 sub-subfamily. As to quaternary structure, heterodimer; disulfide-linked. The A chains have phospholipase A2 activity and the B chains show homology with the basic protease inhibitors. The A1 chain is found in beta-1 and beta-2 bungarotoxins. The cofactor is Ca(2+). Expressed by the venom gland.

It localises to the secreted. The enzyme catalyses a 1,2-diacyl-sn-glycero-3-phosphocholine + H2O = a 1-acyl-sn-glycero-3-phosphocholine + a fatty acid + H(+). Snake venom phospholipase A2 (PLA2) that inhibits neuromuscular transmission by blocking acetylcholine release from the nerve termini. PLA2 catalyzes the calcium-dependent hydrolysis of the 2-acyl groups in 3-sn-phosphoglycerides. The sequence is that of Basic phospholipase A2 beta-bungarotoxin A1 chain from Bungarus multicinctus (Many-banded krait).